The sequence spans 258 residues: Short-chain dehydrogenase reductase 3c (258 aa).

Position 12 to 36 (12 to 36) interacts with NAD(+); the sequence is IITGGASGIGADAARLFTDHGAKVV. Serine 144 is a substrate binding site. Tyrosine 156 (proton acceptor) is an active-site residue.

The protein belongs to the short-chain dehydrogenases/reductases (SDR) family.

The sequence is that of Short-chain dehydrogenase reductase 3c (SDR3c) from Arabidopsis thaliana (Mouse-ear cress).